The chain runs to 143 residues: Large ribosomal subunit protein uL13 (143 aa).

It belongs to the universal ribosomal protein uL13 family. As to quaternary structure, part of the 50S ribosomal subunit.

Functionally, this protein is one of the early assembly proteins of the 50S ribosomal subunit, although it is not seen to bind rRNA by itself. It is important during the early stages of 50S assembly. This chain is Large ribosomal subunit protein uL13, found in Dehalococcoides mccartyi (strain CBDB1).